Reading from the N-terminus, the 261-residue chain is Pantothenate synthetase (261 aa).

Met-29–His-36 is a binding site for ATP. Residue His-36 is the Proton donor of the active site. A (R)-pantoate-binding site is contributed by Gln-60. Gln-60 provides a ligand contact to beta-alanine. ATP is bound at residue Gly-147–Asp-150. Gln-153 lines the (R)-pantoate pocket. An ATP-binding site is contributed by Leu-184–Arg-187.

The protein belongs to the pantothenate synthetase family. As to quaternary structure, homodimer.

It is found in the cytoplasm. The catalysed reaction is (R)-pantoate + beta-alanine + ATP = (R)-pantothenate + AMP + diphosphate + H(+). It functions in the pathway cofactor biosynthesis; (R)-pantothenate biosynthesis; (R)-pantothenate from (R)-pantoate and beta-alanine: step 1/1. Catalyzes the condensation of pantoate with beta-alanine in an ATP-dependent reaction via a pantoyl-adenylate intermediate. This chain is Pantothenate synthetase, found in Francisella philomiragia subsp. philomiragia (strain ATCC 25017 / CCUG 19701 / FSC 153 / O#319-036).